The chain runs to 349 residues: Aminomethyltransferase (349 aa).

Belongs to the GcvT family. The glycine cleavage system is composed of four proteins: P, T, L and H.

The catalysed reaction is N(6)-[(R)-S(8)-aminomethyldihydrolipoyl]-L-lysyl-[protein] + (6S)-5,6,7,8-tetrahydrofolate = N(6)-[(R)-dihydrolipoyl]-L-lysyl-[protein] + (6R)-5,10-methylene-5,6,7,8-tetrahydrofolate + NH4(+). Functionally, the glycine cleavage system catalyzes the degradation of glycine. The polypeptide is Aminomethyltransferase (Thermus thermophilus (strain ATCC BAA-163 / DSM 7039 / HB27)).